Reading from the N-terminus, the 296-residue chain is Ribosomal protein L11 methyltransferase (296 aa).

4 residues coordinate S-adenosyl-L-methionine: threonine 151, glycine 172, aspartate 194, and asparagine 233.

It belongs to the methyltransferase superfamily. PrmA family.

The protein resides in the cytoplasm. The enzyme catalyses L-lysyl-[protein] + 3 S-adenosyl-L-methionine = N(6),N(6),N(6)-trimethyl-L-lysyl-[protein] + 3 S-adenosyl-L-homocysteine + 3 H(+). Its function is as follows. Methylates ribosomal protein L11. The sequence is that of Ribosomal protein L11 methyltransferase from Dechloromonas aromatica (strain RCB).